The sequence spans 161 residues: Carboxysome assembly protein CcmN (161 aa).

The tract at residues 111-140 is disordered; sequence LLSAETPPTTATVSSSEPAGRSPQSSAIAH. Residues 116–137 are compositionally biased toward polar residues; the sequence is TPPTTATVSSSEPAGRSPQSSA. Positions 144–161 match the Encapsulation peptide motif; it reads VYGKEQFLRMRQSMFPDR.

This sequence belongs to the CcmN family. Interacts with CcmM via the N-terminus of CcmN. Interacts with CcmK2 via the 18 C-terminal residues.

The protein localises to the carboxysome. Its function is as follows. Required for carboxysome formation; the N-terminus interacts with CcmM which itself binds RuBisCO (ribulose bisphosphate carboxylase, rbcL-rbcS), while the C-terminal 18 residues interact with carboxysome shell protein CcmK2. Required for growth in normal air. Beta-carboxysome assembly initiates when soluble RuBisCO is condensed into a liquid matrix in a pre-carboxysome by the RbcS-like domains of probably both CcmM58 and CcmM35. CcmN interacts with the N-terminus of CcmM58, and then recruits the CcmK2 major shell protein via CcmN's encapsulation peptide. Shell formation requires CcmK proteins and CcmO. CcmL caps the otherwise elongated carboxysome. Once fully encapsulated carboxysomes are formed, they migrate within the cell probably via interactions with the cytoskeleton. The chain is Carboxysome assembly protein CcmN from Synechococcus elongatus (strain ATCC 33912 / PCC 7942 / FACHB-805) (Anacystis nidulans R2).